Reading from the N-terminus, the 289-residue chain is Bifunctional protein FolD 2 (289 aa).

Residues 162 to 164 (GRS), Ser-187, and Ile-228 each bind NADP(+).

The protein belongs to the tetrahydrofolate dehydrogenase/cyclohydrolase family. As to quaternary structure, homodimer.

The catalysed reaction is (6R)-5,10-methylene-5,6,7,8-tetrahydrofolate + NADP(+) = (6R)-5,10-methenyltetrahydrofolate + NADPH. It catalyses the reaction (6R)-5,10-methenyltetrahydrofolate + H2O = (6R)-10-formyltetrahydrofolate + H(+). The protein operates within one-carbon metabolism; tetrahydrofolate interconversion. Its function is as follows. Catalyzes the oxidation of 5,10-methylenetetrahydrofolate to 5,10-methenyltetrahydrofolate and then the hydrolysis of 5,10-methenyltetrahydrofolate to 10-formyltetrahydrofolate. This Deinococcus geothermalis (strain DSM 11300 / CIP 105573 / AG-3a) protein is Bifunctional protein FolD 2.